The chain runs to 538 residues: Cytochrome P450 734A4 (538 aa).

Residues 5 to 27 traverse the membrane as a helical segment; that stretch reads VAVAAAVLLLLHVAARVADAVWW. Residue cysteine 480 participates in heme binding.

The protein belongs to the cytochrome P450 family. The cofactor is heme. As to expression, expressed in roots, shoot apex, leaf sheaths, leaf blades, internodes and panicles.

The protein localises to the membrane. Functionally, cytochrome P450 involved in brassinosteroids (BRs) inactivation and regulation of BRs homeostasis. Is a multifunctional and multisubstrate enzyme that controls the endogenous bioactive BR content both by direct inactivation of castasterone (CS) and by decreasing the levels of BR precursors. Catalyzes the oxidation of carbon 22 hydroxylated BR intermediates to produce C26 oxidized metabolites. The protein is Cytochrome P450 734A4 (CYP734A4) of Oryza sativa subsp. japonica (Rice).